The primary structure comprises 94 residues: Neutrophil defensin 1 (94 aa).

An N-terminal signal peptide occupies residues 1 to 19 (MRTLAILAAILLVALQAQA). Positions 20 to 64 (EPLQARADEVAAAPEQIPADNPEVVVSLAWDESLAPKHPGSRKNV) are excised as a propeptide. Cystine bridges form between C66/C94, C68/C83, and C73/C93. R78 bears the ADP-ribosylarginine; by ART1 mark. Residue Y85 is modified to Phosphotyrosine. R88 carries the post-translational modification ADP-ribosylarginine; by ART1.

Belongs to the alpha-defensin family. In terms of assembly, tetramer. Dimer. Interacts with RETN. In terms of processing, ADP-ribosylation drastically reduces cytotoxic and antibacterial activities, and enhances IL8 production.

The protein resides in the secreted. Its function is as follows. Effector molecule of the innate immune system that acts via antibiotic-like properties against a broad array of infectious agents including bacteria, fungi, and viruses or by promoting the activation and maturation of some APCs. Interacts with the essential precursor of cell wall synthesis lipid II to inhibit bacterial cell wall synthesis. Inhibits adenovirus infection via inhibition of viral disassembly at the vertex region, thereby restricting the release of internal capsid protein pVI, which is required for endosomal membrane penetration during cell entry. In addition, interaction with adenovirus capsid leads to the redirection of viral particles to TLR4 thereby promoting a NLRP3-mediated inflammasome response and interleukin 1-beta (IL-1beta) release. Induces the production of proinflammatory cytokines including type I interferon (IFN) in plasmacytoid dendritic cells (pDCs) by triggering the degradation of NFKBIA and nuclear translocation of IRF1, both of which are required for activation of pDCs. In Pan troglodytes (Chimpanzee), this protein is Neutrophil defensin 1 (DEFA1).